Reading from the N-terminus, the 133-residue chain is ATP synthase epsilon chain (133 aa).

It belongs to the ATPase epsilon chain family. As to quaternary structure, F-type ATPases have 2 components, CF(1) - the catalytic core - and CF(0) - the membrane proton channel. CF(1) has five subunits: alpha(3), beta(3), gamma(1), delta(1), epsilon(1). CF(0) has three main subunits: a, b and c.

It is found in the cell inner membrane. Produces ATP from ADP in the presence of a proton gradient across the membrane. This chain is ATP synthase epsilon chain, found in Paramagnetospirillum magneticum (strain ATCC 700264 / AMB-1) (Magnetospirillum magneticum).